A 433-amino-acid chain; its full sequence is Dihydrolipoyllysine-residue acetyltransferase component of pyruvate dehydrogenase complex (433 aa).

In terms of domain architecture, Lipoyl-binding spans 2 to 77; that stretch reads AFEFRLPDIG…VVGDVIVKID (76 aa). An N6-lipoyllysine modification is found at Lys43. Disordered regions lie at residues 80–134 and 164–204; these read DAEE…PSVR and YLNG…FPET. 2 stretches are compositionally biased toward basic and acidic residues: residues 84 to 103 and 117 to 126; these read MQFK…KEQE and EKTEVDESKT. The Peripheral subunit-binding (PSBD) domain maps to 128 to 165; it reads KAMPSVRKYARENGVNIKAVNGSGKNGRITKEDIDAYL. A compositionally biased stretch (low complexity) spans 166–188; it reads NGGSSEEGSNTSVASESTSSDVV. His404 is an active-site residue.

Belongs to the 2-oxoacid dehydrogenase family. In terms of assembly, forms a 24-polypeptide structural core with octahedral symmetry. (R)-lipoate is required as a cofactor.

The catalysed reaction is N(6)-[(R)-dihydrolipoyl]-L-lysyl-[protein] + acetyl-CoA = N(6)-[(R)-S(8)-acetyldihydrolipoyl]-L-lysyl-[protein] + CoA. Functionally, the pyruvate dehydrogenase complex catalyzes the overall conversion of pyruvate to acetyl-CoA and CO(2). It contains multiple copies of three enzymatic components: pyruvate dehydrogenase (E1), dihydrolipoamide acetyltransferase (E2) and lipoamide dehydrogenase (E3). The sequence is that of Dihydrolipoyllysine-residue acetyltransferase component of pyruvate dehydrogenase complex (pdhC) from Staphylococcus epidermidis (strain ATCC 12228 / FDA PCI 1200).